Here is a 124-residue protein sequence, read N- to C-terminus: Large ribosomal subunit protein bL12 (124 aa).

This sequence belongs to the bacterial ribosomal protein bL12 family. As to quaternary structure, homodimer. Part of the ribosomal stalk of the 50S ribosomal subunit. Forms a multimeric L10(L12)X complex, where L10 forms an elongated spine to which 2 to 4 L12 dimers bind in a sequential fashion. Binds GTP-bound translation factors.

Forms part of the ribosomal stalk which helps the ribosome interact with GTP-bound translation factors. Is thus essential for accurate translation. This Cupriavidus taiwanensis (strain DSM 17343 / BCRC 17206 / CCUG 44338 / CIP 107171 / LMG 19424 / R1) (Ralstonia taiwanensis (strain LMG 19424)) protein is Large ribosomal subunit protein bL12.